Here is a 237-residue protein sequence, read N- to C-terminus: tRNA1(Val) (adenine(37)-N6)-methyltransferase (237 aa).

It belongs to the methyltransferase superfamily. tRNA (adenine-N(6)-)-methyltransferase family.

The protein resides in the cytoplasm. It catalyses the reaction adenosine(37) in tRNA1(Val) + S-adenosyl-L-methionine = N(6)-methyladenosine(37) in tRNA1(Val) + S-adenosyl-L-homocysteine + H(+). Functionally, specifically methylates the adenine in position 37 of tRNA(1)(Val) (anticodon cmo5UAC). In Bacteroides fragilis (strain YCH46), this protein is tRNA1(Val) (adenine(37)-N6)-methyltransferase.